A 92-amino-acid chain; its full sequence is Small ribosomal subunit protein uS19 (92 aa).

The protein belongs to the universal ribosomal protein uS19 family.

In terms of biological role, protein S19 forms a complex with S13 that binds strongly to the 16S ribosomal RNA. In Pectobacterium atrosepticum (strain SCRI 1043 / ATCC BAA-672) (Erwinia carotovora subsp. atroseptica), this protein is Small ribosomal subunit protein uS19.